The chain runs to 63 residues: Overexpressed in colon carcinoma 1 protein homolog (63 aa).

A compositionally biased stretch (polar residues) spans 1–10 (MGCGNSTATS). Residues 1–37 (MGCGNSTATSAAAGRGKPGAVKDATEDSITEDDKRRN) are disordered.

It belongs to the OCC1 family.

This chain is Overexpressed in colon carcinoma 1 protein homolog, found in Rattus norvegicus (Rat).